The primary structure comprises 538 residues: Chaperonin GroEL (538 aa).

Residues 29–32, 86–90, Gly-413, 479–481, and Asp-495 contribute to the ATP site; these read TLGP, DGTTT, and DAL.

The protein belongs to the chaperonin (HSP60) family. In terms of assembly, forms a cylinder of 14 subunits composed of two heptameric rings stacked back-to-back. Interacts with the co-chaperonin GroES.

The protein resides in the cytoplasm. The catalysed reaction is ATP + H2O + a folded polypeptide = ADP + phosphate + an unfolded polypeptide.. Functionally, together with its co-chaperonin GroES, plays an essential role in assisting protein folding. The GroEL-GroES system forms a nano-cage that allows encapsulation of the non-native substrate proteins and provides a physical environment optimized to promote and accelerate protein folding. The protein is Chaperonin GroEL of Thermotoga maritima (strain ATCC 43589 / DSM 3109 / JCM 10099 / NBRC 100826 / MSB8).